Reading from the N-terminus, the 164-residue chain is Protein-export protein SecB (164 aa).

The protein belongs to the SecB family. As to quaternary structure, homotetramer, a dimer of dimers. One homotetramer interacts with 1 SecA dimer.

The protein resides in the cytoplasm. One of the proteins required for the normal export of preproteins out of the cell cytoplasm. It is a molecular chaperone that binds to a subset of precursor proteins, maintaining them in a translocation-competent state. It also specifically binds to its receptor SecA. This chain is Protein-export protein SecB, found in Caulobacter sp. (strain K31).